We begin with the raw amino-acid sequence, 845 residues long: Krueppel homolog 1 (845 aa).

The disordered stretch occupies residues 141-164; it reads QKQQQQQQHESITNAAPTAAPSAQ. 8 C2H2-type zinc fingers span residues 194–216, 271–293, 299–321, 327–349, 355–377, 383–407, 413–435, and 441–463; these read FKCD…TKSH, YQCN…YRTH, FECE…RRIH, YKCD…MRIH, HKCS…MRTH, YKCP…SRTH, YHCD…RVQH, and YKCT…IKGH. 2 disordered regions span residues 469–610 and 757–845; these read DDEA…VQGQ and GLRS…AKAS. 3 stretches are compositionally biased toward low complexity: residues 474-491, 498-508, and 532-559; these read AAAA…SAGS, SSNSESSNHSP, and ATLS…SSMA. Over residues 582–591 the composition is skewed to polar residues; it reads SGVSSAQPAH. Positions 759 to 775 are enriched in low complexity; that stretch reads RSSTESPERSSSPESDS. Residues 796–809 show a composition bias toward basic and acidic residues; the sequence is NKGDDGQVDSEKAS. A compositionally biased stretch (low complexity) spans 810–823; it reads GDGTSAAGGAASVG.

Belongs to the krueppel C2H2-type zinc-finger protein family.

Its function is as follows. Plays a general role in the hierarchies of gene expression leading to metamorphosis. The sequence is that of Krueppel homolog 1 (Kr-h1) from Drosophila melanogaster (Fruit fly).